Reading from the N-terminus, the 461-residue chain is tRNA (guanine(10)-N(2))-methyltransferase TRMT11 (461 aa).

Belongs to the class I-like SAM-binding methyltransferase superfamily. TRM11 methyltransferase family. In terms of assembly, part of the heterodimeric TRMT11-TRM112 methyltransferase complex; this complex forms an active tRNA methyltransferase, where TRMT112 acts as an activator of the catalytic subunit TRMT11.

The protein localises to the cytoplasm. The catalysed reaction is guanosine(10) in tRNA + S-adenosyl-L-methionine = N(2)-methylguanosine(10) in tRNA + S-adenosyl-L-homocysteine + H(+). Its function is as follows. Catalytic subunit of the TRMT11-TRM112 methyltransferase complex, that specifically mediates the S-adenosyl-L-methionine-dependent N(2)-methylation of guanosine nucleotide at position 10 (m2G10) in tRNAs. This is one of the major tRNA (guanine-N(2))-methyltransferases. This is tRNA (guanine(10)-N(2))-methyltransferase TRMT11 from Gallus gallus (Chicken).